The sequence spans 448 residues: Carbon catabolite repressor protein 4 homolog 3 (448 aa).

A compositionally biased stretch (low complexity) spans S50–S67. Residues S50–R92 are disordered. E162 contacts Mg(2+).

The protein belongs to the CCR4/nocturin family. As to quaternary structure, component of the CCR4-NOT complex, at least composed of CRR4 and CAF1 proteins. The cofactor is Mg(2+).

The protein localises to the nucleus. The protein resides in the cytoplasm. It carries out the reaction Exonucleolytic cleavage of poly(A) to 5'-AMP.. Its function is as follows. Acts as a catalytic component of the CCR4-NOT core complex, which in the nucleus seems to be a general transcription factor, and in the cytoplasm the major mRNA deadenylase involved in mRNA turnover. The protein is Carbon catabolite repressor protein 4 homolog 3 (CCR4-3) of Arabidopsis thaliana (Mouse-ear cress).